Reading from the N-terminus, the 435-residue chain is Eukaryotic translation initiation factor 3 subunit E (435 aa).

One can recognise a PCI domain in the interval 219 to 392 (FFNHAKGRDL…GHVVMGTQPL (174 aa)).

It belongs to the eIF-3 subunit E family. In terms of assembly, component of the eukaryotic translation initiation factor 3 (eIF-3) complex.

Its subcellular location is the cytoplasm. In terms of biological role, component of the eukaryotic translation initiation factor 3 (eIF-3) complex, which is involved in protein synthesis of a specialized repertoire of mRNAs and, together with other initiation factors, stimulates binding of mRNA and methionyl-tRNAi to the 40S ribosome. The eIF-3 complex specifically targets and initiates translation of a subset of mRNAs involved in cell proliferation. The protein is Eukaryotic translation initiation factor 3 subunit E (eIF3-S6) of Aedes aegypti (Yellowfever mosquito).